Reading from the N-terminus, the 3117-residue chain is Centrosome-associated protein 350 (3117 aa).

Residues 1–24 (MRSSKSKEVPLPNPRNSQSKDTVQ) are disordered. Residues 14-24 (PRNSQSKDTVQ) are compositionally biased toward polar residues. S86, S139, S142, and S218 each carry phosphoserine. Disordered stretches follow at residues 249–275 (PKAL…ILKR), 436–514 (ILGP…NKQE), 548–625 (TVEL…TEQK), and 671–722 (LEEP…PPQP). Low complexity predominate over residues 255 to 267 (TDSSPSSTSTSNS). Basic and acidic residues predominate over residues 469 to 501 (GRAESDPRLDVLHRHLQRNSERSRSKSRSENNI). 2 positions are modified to phosphoserine: S473 and S507. Residues 563–573 (PRSHSPVKRKP) are compositionally biased toward basic residues. 2 stretches are compositionally biased toward basic and acidic residues: residues 591-625 (YDTD…TEQK) and 694-703 (ESDKENKVQE). Residues 598–645 (QYIVRQQEERKRKQNEEKKAQKEATEQKNKRLQELYRKQKEAFTKVKN) are a coiled coil. S695 is subject to Phosphoserine. Residues 705–718 (PPSASSSSDMSLSE) show a composition bias toward low complexity. T878 carries the post-translational modification Phosphothreonine. Position 939 is a phosphoserine (S939). Low complexity predominate over residues 981–992 (SVSEGPLLSEGS). The segment at 981–1002 (SVSEGPLLSEGSLSEEEGDQDG) is disordered. S1061 is subject to Phosphoserine. A disordered region spans residues 1081–1298 (EDKLDRGTST…GFKPNAPLTD (218 aa)). The span at 1087 to 1102 (GTSTSRPLNATATPLS) shows a compositional bias: polar residues. Basic and acidic residues predominate over residues 1135-1144 (QEDHSNRKSA). Low complexity-rich tracts occupy residues 1153–1172 (TSQH…STSS) and 1251–1267 (QKTP…KSLQ). T1253 is modified (phosphothreonine). S1256 and S1259 each carry phosphoserine. Over residues 1272–1283 (GTSSERSKSSVM) the composition is skewed to polar residues. A coiled-coil region spans residues 1369-1411 (IKAQQQRHERDLALLKLKAEQEALESQRQLEETRNKAAQVHAE). Disordered stretches follow at residues 1494–1674 (TRTE…GGQD) and 1794–1854 (KLKS…SRMD). Polar residues predominate over residues 1503–1512 (PSVSLSQSKE). Composition is skewed to low complexity over residues 1522–1535 (YSAS…SSGY) and 1543–1556 (SSGS…SVPS). The segment covering 1558 to 1571 (KENEKKLNGEKIES) has biased composition (basic and acidic residues). Position 1613 is a phosphoserine (S1613). The segment covering 1631–1647 (ESHRRFNMEKRRGHHDD) has biased composition (basic and acidic residues). A phosphoserine mark is found at S1648 and S1653. Residues 1707–1800 (KALKEKTKAE…LQEKLKSAGE (94 aa)) adopt a coiled-coil conformation. Residues 1794-1815 (KLKSAGESKLDSHSDDDTKDNK) show a composition bias toward basic and acidic residues. S1818 carries the post-translational modification Phosphoserine. Low complexity predominate over residues 1827 to 1841 (RSPSPISISSSETSS). Residues 1856–1899 (KFLTKREQKLMQRRQHAEELLEWKRRLDAEEAEIRQMEKQALAA) adopt a coiled-coil conformation. A compositionally biased stretch (basic and acidic residues) spans 1903-1925 (ELIKPKTPKKELEDQRTEQKEIA). Disordered regions lie at residues 1903-2020 (ELIK…QCHL), 2107-2221 (ELSQ…ESGD), 2329-2356 (LKER…QKNT), and 2407-2432 (KDSQ…FGSN). S1936 is subject to Phosphoserine. Positions 1983-2005 (ELESSTSPSKHSLPKSCTSVSKQ) are enriched in polar residues. The stretch at 2051–2110 (EGRIRALKDELRKRKSVVNQLKKEQKKRQKERLKAQEASLIKQLESYDEFIKKTEAELSQ) forms a coiled coil. Over residues 2111-2129 (DLETSPTAKPQIKTLSSAS) the composition is skewed to polar residues. S2115 bears the Phosphoserine mark. Basic and acidic residues predominate over residues 2141-2170 (HRSETAKNWKSLTESERSRGSLESIAEHVD). Residues 2173–2184 (LSGSERSVSERS) are compositionally biased toward polar residues. The segment covering 2191-2201 (RVNEWDSRTED) has biased composition (basic and acidic residues). T2204 carries the post-translational modification Phosphothreonine. S2206 carries the phosphoserine modification. Composition is skewed to basic and acidic residues over residues 2329–2338 (LKERQSDQDM) and 2407–2417 (KDSQSCRDKPQ). Polar residues predominate over residues 2419–2432 (MRSSTSGATSFGSN). Phosphoserine occurs at positions 2431 and 2460. Basic and acidic residues predominate over residues 2465-2478 (MKSKERSDVEHEQQ). The interval 2465–2485 (MKSKERSDVEHEQQVTESPSL) is disordered. Residues 2517-2559 (GETSFAKGFWAGVELDKPEGNNNGTYDGIAYFECKEKHGIFAP) enclose the CAP-Gly domain. T2689 is subject to Phosphothreonine. Residues 2719–2752 (LLDLLTREKNQLEAQLKSSLNEEKKSKQQLEKIS) adopt a coiled-coil conformation. S2830 and S2839 each carry phosphoserine.

Part of a ternary complex that contains CEP350, CEP43 and MAPRE1. Interacts (via C-terminus) directly with CEP43 (via N-terminus). Interacts with NR1H3, PPARA, PPARD and PPARG. Interacts directly with microtubules. Interacts with the fusion protein CEP43-FGFR1, and by doing so recruits and activates PI3K and PLC-gamma. Interacts with CYLD. Interacts with CFAP157. Interacts with CEP19 (via C-terminus). Interacts with CEP78; promoting CEP78 localization to centrosome and centriole. Post-translationally, phosphorylated during mitosis. As to expression, detected in heart, brain, skeletal muscle, testis, placenta, lung, liver, kidney and pancreas.

The protein resides in the cytoplasm. It is found in the cytoskeleton. The protein localises to the microtubule organizing center. It localises to the centrosome. Its subcellular location is the spindle. The protein resides in the nucleus. It is found in the centriole. The protein localises to the cilium basal body. Its function is as follows. Plays an essential role in centriole growth by stabilizing a procentriolar seed composed of at least, SASS6 and CPAP. Required for anchoring microtubules to the centrosomes and for the integrity of the microtubule network. Recruits PPARA to discrete subcellular compartments and thereby modulates PPARA activity. Required for ciliation. This chain is Centrosome-associated protein 350, found in Homo sapiens (Human).